The sequence spans 207 residues: Small ribosomal subunit protein uS4A (207 aa).

In terms of domain architecture, S4 RNA-binding spans 98-161 (RRLDNVVYRM…REHKRIKELA (64 aa)).

Belongs to the universal ribosomal protein uS4 family. Part of the 30S ribosomal subunit. Contacts protein S5. The interaction surface between S4 and S5 is involved in control of translational fidelity.

Functionally, one of the primary rRNA binding proteins, it binds directly to 16S rRNA where it nucleates assembly of the body of the 30S subunit. Its function is as follows. With S5 and S12 plays an important role in translational accuracy. The sequence is that of Small ribosomal subunit protein uS4A from Symbiobacterium thermophilum (strain DSM 24528 / JCM 14929 / IAM 14863 / T).